Consider the following 454-residue polypeptide: F-box protein At1g67130 (454 aa).

Residues 4-53 (GETLDSIPTDLILDILSRLPTKSIARFHCVSKLWSSMLASQDFTRLFVNR) form the F-box domain.

In Arabidopsis thaliana (Mouse-ear cress), this protein is F-box protein At1g67130.